We begin with the raw amino-acid sequence, 270 residues long: uncharacterized protein (270 aa).

A signal peptide spans Met1 to Gly22. A lipid anchor (N-palmitoyl cysteine) is attached at Cys23. Residue Cys23 is the site of S-diacylglycerol cysteine attachment.

It belongs to the staphylococcal tandem lipoprotein family.

Its subcellular location is the cell membrane. This is an uncharacterized protein from Staphylococcus aureus (strain COL).